The sequence spans 349 residues: Hydroxymethylglutaryl-CoA synthase (349 aa).

(3S)-3-hydroxy-3-methylglutaryl-CoA is bound by residues Asp29 and Ala30. Glu81 acts as the Proton donor/acceptor in catalysis. (3S)-3-hydroxy-3-methylglutaryl-CoA-binding residues include Cys113 and Thr154. Cys113 (acyl-thioester intermediate) is an active-site residue. Arg202 is a binding site for CoA. (3S)-3-hydroxy-3-methylglutaryl-CoA contacts are provided by Thr204 and His237. The active-site Proton donor/acceptor is the His237. Lys242 lines the CoA pocket. Arg246, Asn269, and Ser299 together coordinate (3S)-3-hydroxy-3-methylglutaryl-CoA.

The protein belongs to the thiolase-like superfamily. Archaeal HMG-CoA synthase family. Interacts with acetoacetyl-CoA thiolase that catalyzes the precedent step in the pathway and with a DUF35 protein. The acetoacetyl-CoA thiolase/HMG-CoA synthase complex channels the intermediate via a fused CoA-binding site, which allows for efficient coupling of the endergonic thiolase reaction with the exergonic HMGCS reaction.

It catalyses the reaction acetoacetyl-CoA + acetyl-CoA + H2O = (3S)-3-hydroxy-3-methylglutaryl-CoA + CoA + H(+). It functions in the pathway metabolic intermediate biosynthesis; (R)-mevalonate biosynthesis; (R)-mevalonate from acetyl-CoA: step 2/3. Functionally, catalyzes the condensation of acetyl-CoA with acetoacetyl-CoA to form 3-hydroxy-3-methylglutaryl-CoA (HMG-CoA). Functions in the mevalonate (MVA) pathway leading to isopentenyl diphosphate (IPP), a key precursor for the biosynthesis of isoprenoid compounds that are building blocks of archaeal membrane lipids. This Methanococcoides burtonii (strain DSM 6242 / NBRC 107633 / OCM 468 / ACE-M) protein is Hydroxymethylglutaryl-CoA synthase.